Consider the following 373-residue polypeptide: tRNA-specific 2-thiouridylase MnmA (373 aa).

Residues 12–19 (GMSGGVDS) and methionine 38 contribute to the ATP site. An interaction with target base in tRNA region spans residues 98–100 (NPD). Cysteine 103 serves as the catalytic Nucleophile. A disulfide bond links cysteine 103 and cysteine 200. Residue glycine 127 coordinates ATP. The tract at residues 150–152 (KDQ) is interaction with tRNA. Residue cysteine 200 is the Cysteine persulfide intermediate of the active site. The segment at 312-313 (RY) is interaction with tRNA.

It belongs to the MnmA/TRMU family.

The protein resides in the cytoplasm. It catalyses the reaction S-sulfanyl-L-cysteinyl-[protein] + uridine(34) in tRNA + AH2 + ATP = 2-thiouridine(34) in tRNA + L-cysteinyl-[protein] + A + AMP + diphosphate + H(+). Its function is as follows. Catalyzes the 2-thiolation of uridine at the wobble position (U34) of tRNA, leading to the formation of s(2)U34. This Streptococcus pyogenes serotype M2 (strain MGAS10270) protein is tRNA-specific 2-thiouridylase MnmA.